A 150-amino-acid polypeptide reads, in one-letter code: UPF0178 protein Shewana3_1627 (150 aa).

Belongs to the UPF0178 family.

In Shewanella sp. (strain ANA-3), this protein is UPF0178 protein Shewana3_1627.